Consider the following 705-residue polypeptide: Fatty acid oxidation complex subunit alpha (705 aa).

An enoyl-CoA hydratase region spans residues 1-190; sequence MSEQKAFNLK…KLGVVDACVP (190 aa). The 3-hydroxyacyl-CoA dehydrogenase stretch occupies residues 308-705; the sequence is SKVGMVGVLG…AGEGRRFYDN (398 aa).

This sequence in the N-terminal section; belongs to the enoyl-CoA hydratase/isomerase family. It in the central section; belongs to the 3-hydroxyacyl-CoA dehydrogenase family. As to quaternary structure, heterotetramer of two alpha chains (FadJ) and two beta chains (FadI).

It localises to the cytoplasm. The catalysed reaction is a (3S)-3-hydroxyacyl-CoA = a (2E)-enoyl-CoA + H2O. The enzyme catalyses a 4-saturated-(3S)-3-hydroxyacyl-CoA = a (3E)-enoyl-CoA + H2O. It carries out the reaction a (3S)-3-hydroxyacyl-CoA + NAD(+) = a 3-oxoacyl-CoA + NADH + H(+). It catalyses the reaction (3S)-3-hydroxybutanoyl-CoA = (3R)-3-hydroxybutanoyl-CoA. It participates in lipid metabolism; fatty acid beta-oxidation. In terms of biological role, catalyzes the formation of a hydroxyacyl-CoA by addition of water on enoyl-CoA. Also exhibits 3-hydroxyacyl-CoA epimerase and 3-hydroxyacyl-CoA dehydrogenase activities. The protein is Fatty acid oxidation complex subunit alpha of Vibrio vulnificus (strain CMCP6).